Reading from the N-terminus, the 104-residue chain is SOSS complex subunit C (104 aa).

Ala-2 is subject to N-acetylalanine.

The protein belongs to the SOSS-C family. Component of the SOSS complex, composed of SOSS-B (SOSS-B1/NABP2 or SOSS-B2/NABP1), SOSS-A/INTS3 and SOSS-C/INIP. SOSS complexes containing SOSS-B1/NABP2 are more abundant than complexes containing SOSS-B2/NABP1. Interacts with INTS3; the interaction is direct.

It localises to the nucleus. In terms of biological role, component of the SOSS complex, a multiprotein complex that functions downstream of the MRN complex to promote DNA repair and G2/M checkpoint. The SOSS complex associates with single-stranded DNA at DNA lesions and influences diverse endpoints in the cellular DNA damage response including cell-cycle checkpoint activation, recombinational repair and maintenance of genomic stability. Required for efficient homologous recombination-dependent repair of double-strand breaks (DSBs) and ATM-dependent signaling pathways. The chain is SOSS complex subunit C (INIP) from Bos taurus (Bovine).